Reading from the N-terminus, the 204-residue chain is Ribosomal RNA small subunit methyltransferase G (204 aa).

S-adenosyl-L-methionine-binding positions include glycine 76, leucine 81, 127–128 (IE), and arginine 140.

It belongs to the methyltransferase superfamily. RNA methyltransferase RsmG family.

It localises to the cytoplasm. It catalyses the reaction guanosine(527) in 16S rRNA + S-adenosyl-L-methionine = N(7)-methylguanosine(527) in 16S rRNA + S-adenosyl-L-homocysteine. Specifically methylates the N7 position of guanine in position 527 of 16S rRNA. The chain is Ribosomal RNA small subunit methyltransferase G from Francisella philomiragia subsp. philomiragia (strain ATCC 25017 / CCUG 19701 / FSC 153 / O#319-036).